The following is a 972-amino-acid chain: 116 kDa U5 small nuclear ribonucleoprotein component (972 aa).

Met1 bears the N-acetylmethionine mark. Positions 1-53 are disordered; it reads MDTDLYDEFGNYIGPELDSDEDDDELGRETKDLDEVDEDEDDDDVGDHDEDHP. 2 stretches are compositionally biased toward acidic residues: residues 17 to 26 and 34 to 48; these read LDSDEDDDEL and DEVD…VGDH. Ser19 carries the phosphoserine modification. Lys64 participates in a covalent cross-link: Glycyl lysine isopeptide (Lys-Gly) (interchain with G-Cter in SUMO1); alternate. Lys64 is covalently cross-linked (Glycyl lysine isopeptide (Lys-Gly) (interchain with G-Cter in SUMO2); alternate). Phosphothreonine is present on Thr86. The 283-residue stretch at 127–409 folds into the tr-type G domain; it reads ELIRNVTLCG…GIHLTKEELK (283 aa). Residues 136–143, 204–208, and 258–261 contribute to the GTP site; these read GHLHHGKT, DTPGH, and NKID.

Belongs to the TRAFAC class translation factor GTPase superfamily. Classic translation factor GTPase family. EF-G/EF-2 subfamily. Component of the U5 snRNP and the U4/U6-U5 tri-snRNP complex, a building block of the spliceosome. The U4/U6-U5 tri-snRNP complex is composed of the U4, U6 and U5 snRNAs and at least PRPF3, PRPF4, PRPF6, PRPF8, PRPF31, SNRNP200, TXNL4A, SNRNP40, DDX23, CD2BP2, PPIH, SNU13, EFTUD2, SART1 and USP39. Component of the pre-catalytic, catalytic and post-catalytic spliceosome complexes. Component of the minor spliceosome, which splices U12-type introns. Within this complex, interacts with CRIPT. Interacts with ERBB4 and PRPF8. Interacts with PIH1D1. Interacts with RPAP3 and URI1 in a ZNHIT2-dependent manner. Interacts with NRDE2. Interacts with FAM50A. Interacts with UBL5.

Its subcellular location is the nucleus. Functionally, required for pre-mRNA splicing as component of the spliceosome, including pre-catalytic, catalytic and post-catalytic spliceosomal complexes. Component of the U5 snRNP and the U4/U6-U5 tri-snRNP complex, a building block of the spliceosome. As a component of the minor spliceosome, involved in the splicing of U12-type introns in pre-mRNAs. This Bos taurus (Bovine) protein is 116 kDa U5 small nuclear ribonucleoprotein component (EFTUD2).